Consider the following 392-residue polypeptide: Chaperone protein DnaJ 2 (392 aa).

The J domain maps to D10–R75. The segment at G161 to T239 adopts a CR-type zinc-finger fold. Zn(2+)-binding residues include C174, C177, C191, C194, C213, C216, C227, and C230. 4 CXXCXGXG motif repeats span residues C174–G181, C191–G198, C213–G220, and C227–G234.

Belongs to the DnaJ family. As to quaternary structure, homodimer. It depends on Zn(2+) as a cofactor.

The protein localises to the cytoplasm. In terms of biological role, participates actively in the response to hyperosmotic and heat shock by preventing the aggregation of stress-denatured proteins and by disaggregating proteins, also in an autonomous, DnaK-independent fashion. Unfolded proteins bind initially to DnaJ; upon interaction with the DnaJ-bound protein, DnaK hydrolyzes its bound ATP, resulting in the formation of a stable complex. GrpE releases ADP from DnaK; ATP binding to DnaK triggers the release of the substrate protein, thus completing the reaction cycle. Several rounds of ATP-dependent interactions between DnaJ, DnaK and GrpE are required for fully efficient folding. Also involved, together with DnaK and GrpE, in the DNA replication of plasmids through activation of initiation proteins. The sequence is that of Chaperone protein DnaJ 2 from Mycolicibacterium paratuberculosis (strain ATCC BAA-968 / K-10) (Mycobacterium paratuberculosis).